Reading from the N-terminus, the 228-residue chain is Large ribosomal subunit protein uL23m (228 aa).

Residues 194-228 are disordered; that stretch reads PEEEGWSEVEENLPLDESAESAAEESSSKGSETRQ. A compositionally biased stretch (acidic residues) spans 195-216; it reads EEEGWSEVEENLPLDESAESAA.

Belongs to the universal ribosomal protein uL23 family. Component of the mitochondrial large ribosomal subunit (mt-LSU). Mature N.crassa 74S mitochondrial ribosomes consist of a small (37S) and a large (54S) subunit. The 37S small subunit contains a 16S ribosomal RNA (16S mt-rRNA) and 32 different proteins. The 54S large subunit contains a 23S rRNA (23S mt-rRNA) and 42 different proteins. uL23m forms the wall of the exit tunnel.

It localises to the mitochondrion. Functionally, component of the mitochondrial ribosome (mitoribosome), a dedicated translation machinery responsible for the synthesis of mitochondrial genome-encoded proteins, including at least some of the essential transmembrane subunits of the mitochondrial respiratory chain. The mitoribosomes are attached to the mitochondrial inner membrane and translation products are cotranslationally integrated into the membrane. The protein is Large ribosomal subunit protein uL23m (mrp20) of Neurospora crassa (strain ATCC 24698 / 74-OR23-1A / CBS 708.71 / DSM 1257 / FGSC 987).